We begin with the raw amino-acid sequence, 171 residues long: Large ribosomal subunit protein uL15 (171 aa).

Polar residues predominate over residues 1–10 (MKLNEISDNN). Disordered regions lie at residues 1 to 44 (MKLN…RSGV) and 150 to 171 (LPEAQPSEQEKKAARREANKAK). A compositionally biased stretch (gly residues) spans 21-35 (RGIGSGKGKTAGRGQ). The span at 157–171 (EQEKKAARREANKAK) shows a compositional bias: basic and acidic residues.

Belongs to the universal ribosomal protein uL15 family. In terms of assembly, part of the 50S ribosomal subunit.

Binds to the 23S rRNA. The protein is Large ribosomal subunit protein uL15 of Novosphingobium aromaticivorans (strain ATCC 700278 / DSM 12444 / CCUG 56034 / CIP 105152 / NBRC 16084 / F199).